Consider the following 136-residue polypeptide: Large ribosomal subunit protein uL16 (136 aa).

The protein belongs to the universal ribosomal protein uL16 family. As to quaternary structure, part of the 50S ribosomal subunit.

In terms of biological role, binds 23S rRNA and is also seen to make contacts with the A and possibly P site tRNAs. The sequence is that of Large ribosomal subunit protein uL16 from Rickettsia bellii (strain OSU 85-389).